A 428-amino-acid chain; its full sequence is Histidine--tRNA ligase (428 aa).

Belongs to the class-II aminoacyl-tRNA synthetase family. As to quaternary structure, homodimer.

The protein resides in the cytoplasm. The enzyme catalyses tRNA(His) + L-histidine + ATP = L-histidyl-tRNA(His) + AMP + diphosphate + H(+). The chain is Histidine--tRNA ligase from Lactobacillus delbrueckii subsp. bulgaricus (strain ATCC BAA-365 / Lb-18).